The sequence spans 91 residues: MKKLFASLALAAVVAPVWAATQTVTLSVPGMTCSACPITVKKAISEVEGVSKVDVTFETRQAVVTFDDAKTSVQKLTKATADAGYPSSVKQ.

Positions 1-19 (MKKLFASLALAAVVAPVWA) are cleaved as a signal peptide. Residues 22–88 (QTVTLSVPGM…ATADAGYPSS (67 aa)) form the HMA domain. C33 and C36 together coordinate Hg(2+).

The protein belongs to the MerP family. As to quaternary structure, monomer.

It localises to the periplasm. Functionally, involved in mercury resistance. Acts as a mercury scavenger that specifically binds to a mercuric ion in the periplasm and probably passes it to the cytoplasmic mercuric reductase MerA via the mercuric transport protein MerT. This Pseudomonas aeruginosa protein is Mercuric transport protein periplasmic component.